Reading from the N-terminus, the 428-residue chain is Protein Wnt-8b (428 aa).

The N-terminal stretch at 1-22 (MFYTGSFWFIFFILPAIPFCHS) is a signal peptide. Cysteine 54 and cysteine 65 are joined by a disulfide. Residues asparagine 123 and asparagine 176 are each glycosylated (N-linked (GlcNAc...) asparagine). 10 cysteine pairs are disulfide-bonded: cysteine 177/cysteine 185, cysteine 187/cysteine 205, cysteine 253/cysteine 267, cysteine 255/cysteine 262, cysteine 329/cysteine 367, cysteine 345/cysteine 360, cysteine 364/cysteine 406, cysteine 382/cysteine 397, cysteine 384/cysteine 394, and cysteine 389/cysteine 390. Serine 259 carries O-palmitoleoyl serine lipidation. The N-linked (GlcNAc...) asparagine glycan is linked to asparagine 332.

The protein belongs to the Wnt family. In terms of processing, palmitoleoylation is required for efficient binding to frizzled receptors. Depalmitoleoylation leads to Wnt signaling pathway inhibition. Proteolytic processing by tiki1 and tiki2 promotes oxidation and formation of large disulfide-bond oligomers, leading to inactivation of wnt8b. In terms of tissue distribution, in adults, in brain.

It localises to the secreted. The protein resides in the extracellular space. It is found in the extracellular matrix. Functionally, ligand for members of the frizzled family of seven transmembrane receptors. Plays a role in the initiation of dorsal axis development. May activate a Nieuwkoop center-like signaling pathway. This chain is Protein Wnt-8b (wnt8b), found in Xenopus laevis (African clawed frog).